The primary structure comprises 151 residues: Ribosome maturation factor RimP (151 aa).

Belongs to the RimP family.

The protein resides in the cytoplasm. Required for maturation of 30S ribosomal subunits. The chain is Ribosome maturation factor RimP from Shewanella amazonensis (strain ATCC BAA-1098 / SB2B).